Here is a 239-residue protein sequence, read N- to C-terminus: Large ribosomal subunit protein uL1 (239 aa).

It belongs to the universal ribosomal protein uL1 family. In terms of assembly, part of the 50S ribosomal subunit.

Its function is as follows. Binds directly to 23S rRNA. The L1 stalk is quite mobile in the ribosome, and is involved in E site tRNA release. Protein L1 is also a translational repressor protein, it controls the translation of the L11 operon by binding to its mRNA. In Rickettsia africae (strain ESF-5), this protein is Large ribosomal subunit protein uL1.